The primary structure comprises 312 residues: Olfactory receptor 2B8 (312 aa).

Topologically, residues 1 to 25 are extracellular; it reads MDQKNGSSFTGFILLGFSDRPQLEL. N-linked (GlcNAc...) asparagine glycosylation is present at asparagine 5. A helical membrane pass occupies residues 26 to 49; sequence VLFVVLLIFYIFTLLGNKTIIVLS. Residues 50 to 57 are Cytoplasmic-facing; sequence HLDPHLHT. Residues 58–79 form a helical membrane-spanning segment; it reads PMYFFFSNLSFLDLCYTTGIVP. Topologically, residues 80 to 100 are extracellular; the sequence is QLLVNLRGADKSISYGGCVVQ. Cysteine 97 and cysteine 189 are oxidised to a cystine. A helical membrane pass occupies residues 101–120; that stretch reads LYISLGLGSTECVLLGVMVF. The Cytoplasmic segment spans residues 121–139; that stretch reads DRYAAVCRPLHYTVVMHPC. A helical membrane pass occupies residues 140-158; it reads LYVLMASTSWVIGFANSLL. Over 159–195 the chain is Extracellular; sequence QTVLILLLTLCGRNKLEHFLCEVPPLLKLACVDTTMN. N-linked (GlcNAc...) asparagine glycosylation is present at asparagine 195. A helical transmembrane segment spans residues 196-219; sequence ESELFFVSVIILLVPVALIIFSYS. The Cytoplasmic segment spans residues 220 to 236; it reads QIVRAVMRIKLATGQRK. Residues 237-259 form a helical membrane-spanning segment; the sequence is VFGTCGSHLTVVSLFYGTAIYAY. Topologically, residues 260–272 are extracellular; it reads LQPGNNYSQDQGK. An N-linked (GlcNAc...) asparagine glycan is attached at asparagine 265. The chain crosses the membrane as a helical span at residues 273-292; sequence FISLFYTIITPMINPLIYTL. Residues 293–312 are Cytoplasmic-facing; that stretch reads RNKDVKGALKKVLWKNYDSR.

Belongs to the G-protein coupled receptor 1 family.

It is found in the cell membrane. Functionally, odorant receptor. The protein is Olfactory receptor 2B8 of Homo sapiens (Human).